The following is a 469-amino-acid chain: Glutamate--tRNA ligase 2 (469 aa).

The 'HIGH' region signature appears at 8-18 (PSPTGFLHVGG). The 'KMSKS' region signature appears at 250-254 (KLSKR). Position 253 (lysine 253) interacts with ATP.

Belongs to the class-I aminoacyl-tRNA synthetase family. Glutamate--tRNA ligase type 1 subfamily. Monomer.

Its subcellular location is the cytoplasm. The catalysed reaction is tRNA(Glu) + L-glutamate + ATP = L-glutamyl-tRNA(Glu) + AMP + diphosphate. Functionally, catalyzes the attachment of glutamate to tRNA(Glu) in a two-step reaction: glutamate is first activated by ATP to form Glu-AMP and then transferred to the acceptor end of tRNA(Glu). The protein is Glutamate--tRNA ligase 2 of Thermotoga sp. (strain RQ2).